A 328-amino-acid chain; its full sequence is Ribosomal RNA small subunit methyltransferase H (328 aa).

S-adenosyl-L-methionine contacts are provided by residues 64 to 66 (GGH), Asp-83, Phe-112, Asp-129, and Gln-136.

It belongs to the methyltransferase superfamily. RsmH family.

It is found in the cytoplasm. It catalyses the reaction cytidine(1402) in 16S rRNA + S-adenosyl-L-methionine = N(4)-methylcytidine(1402) in 16S rRNA + S-adenosyl-L-homocysteine + H(+). Functionally, specifically methylates the N4 position of cytidine in position 1402 (C1402) of 16S rRNA. This is Ribosomal RNA small subunit methyltransferase H from Bdellovibrio bacteriovorus (strain ATCC 15356 / DSM 50701 / NCIMB 9529 / HD100).